A 545-amino-acid polypeptide reads, in one-letter code: Glucose-6-phosphate isomerase (545 aa).

Glu351 acts as the Proton donor in catalysis. Active-site residues include His382 and Lys510.

Belongs to the GPI family.

The protein resides in the cytoplasm. It carries out the reaction alpha-D-glucose 6-phosphate = beta-D-fructose 6-phosphate. It functions in the pathway carbohydrate biosynthesis; gluconeogenesis. The protein operates within carbohydrate degradation; glycolysis; D-glyceraldehyde 3-phosphate and glycerone phosphate from D-glucose: step 2/4. In terms of biological role, catalyzes the reversible isomerization of glucose-6-phosphate to fructose-6-phosphate. The protein is Glucose-6-phosphate isomerase of Shewanella baltica (strain OS223).